A 308-amino-acid polypeptide reads, in one-letter code: Putative glutamine amidotransferase Rv2859c (308 aa).

Positions 1-62 (MDLSASRSDG…ASPRLRSPLG (62 aa)) are disordered. 3 stretches are compositionally biased toward low complexity: residues 13–24 (PLRPASPRLRSP), 31–42 (PLRPASPRLRSP), and 49–61 (PLRPASPRLRSPL). The 224-residue stretch at 78-301 (RTGVWDIPAG…VDAASGYAGR (224 aa)) folds into the Glutamine amidotransferase type-1 domain. Cys177 serves as the catalytic Nucleophile. Residues His277 and Glu279 contribute to the active site. An Isoglutamyl lysine isopeptide (Lys-Gln) (interchain with Q-Cter in protein Pup) cross-link involves residue Lys289.

The sequence is that of Putative glutamine amidotransferase Rv2859c from Mycobacterium tuberculosis (strain ATCC 25618 / H37Rv).